Reading from the N-terminus, the 202-residue chain is Adapter protein MecA 2 (202 aa).

Belongs to the MecA family. In terms of assembly, homodimer.

Its function is as follows. Enables the recognition and targeting of unfolded and aggregated proteins to the ClpC protease or to other proteins involved in proteolysis. Acts negatively in the development of competence by binding ComK and recruiting it to the ClpCP protease. When overexpressed, inhibits sporulation. Also involved in Spx degradation by ClpC. This chain is Adapter protein MecA 2 (mecA2), found in Bacillus cereus (strain ATCC 14579 / DSM 31 / CCUG 7414 / JCM 2152 / NBRC 15305 / NCIMB 9373 / NCTC 2599 / NRRL B-3711).